The chain runs to 226 residues: ATP synthase subunit a (226 aa).

A run of 7 helical transmembrane segments spans residues 18-38 (FIIG…ARYA), 44-64 (VVPS…ISFA), 79-99 (LAAT…IPGF), 105-125 (SWSF…FEGI), 137-157 (FMGP…ISHF), 177-197 (FLLV…FAIL), and 202-222 (LLQA…AVVV).

Belongs to the ATPase A chain family. As to quaternary structure, F-type ATPases have 2 components, CF(1) - the catalytic core - and CF(0) - the membrane proton channel. CF(1) has five subunits: alpha(3), beta(3), gamma(1), delta(1), epsilon(1). CF(0) has three main subunits: a(1), b(2) and c(9-12). The alpha and beta chains form an alternating ring which encloses part of the gamma chain. CF(1) is attached to CF(0) by a central stalk formed by the gamma and epsilon chains, while a peripheral stalk is formed by the delta and b chains.

Its subcellular location is the cell inner membrane. Its function is as follows. Key component of the proton channel; it plays a direct role in the translocation of protons across the membrane. The chain is ATP synthase subunit a from Helicobacter hepaticus (strain ATCC 51449 / 3B1).